The sequence spans 1372 residues: DNA-directed RNA polymerase subunit beta' (1372 aa).

4 residues coordinate Zn(2+): Cys69, Cys71, Cys84, and Cys87. 3 residues coordinate Mg(2+): Asp460, Asp462, and Asp464. The Zn(2+) site is built by Cys808, Cys882, Cys889, and Cys892.

The protein belongs to the RNA polymerase beta' chain family. The RNAP catalytic core consists of 2 alpha, 1 beta, 1 beta' and 1 omega subunit. When a sigma factor is associated with the core the holoenzyme is formed, which can initiate transcription. It depends on Mg(2+) as a cofactor. Requires Zn(2+) as cofactor.

It carries out the reaction RNA(n) + a ribonucleoside 5'-triphosphate = RNA(n+1) + diphosphate. Functionally, DNA-dependent RNA polymerase catalyzes the transcription of DNA into RNA using the four ribonucleoside triphosphates as substrates. This Rickettsia bellii (strain OSU 85-389) protein is DNA-directed RNA polymerase subunit beta'.